A 491-amino-acid polypeptide reads, in one-letter code: Proline-rich protein PRCC (491 aa).

Positions 1–100 (MSLVAYASSD…PPPPGVSPAE (100 aa)) are mediates interaction with MAD2L2. Disordered regions lie at residues 1–244 (MSLV…SPSA), 260–313 (ITQE…PAFQ), and 432–454 (EEKT…QRRK). The span at 10-26 (DESEPDEAEPEPEEEEA) shows a compositional bias: acidic residues. A compositionally biased stretch (low complexity) spans 40 to 49 (ASLPAPKGPA). A compositionally biased stretch (pro residues) spans 50-96 (LLPPPPQMLAPAFPPPLLLPPPTGDPRLQPPPPLPFGLGGFPPPPGV). Residues Ser-97, Ser-114, Ser-157, Ser-159, Ser-212, and Ser-218 each carry the phosphoserine modification. A compositionally biased stretch (low complexity) spans 111–120 (GLPSPRGPGL). The segment covering 230–244 (APVVGTTTTTPSPSA) has biased composition (low complexity). Residue Thr-239 is modified to Phosphothreonine. Phosphoserine is present on residues Ser-241 and Ser-267. The span at 262–272 (QEEDDSDEEVA) shows a compositional bias: acidic residues. Over residues 287 to 307 (GVEPYPYPIPTVPEELPPGTE) the composition is skewed to pro residues.

Interacts with MAD2L2; the interaction is direct. As to expression, ubiquitous in fetal and adult tissues.

It localises to the nucleus. May regulate cell cycle progression through interaction with MAD2L2. The protein is Proline-rich protein PRCC (PRCC) of Homo sapiens (Human).